Reading from the N-terminus, the 155-residue chain is Ribosomal RNA large subunit methyltransferase H (155 aa).

Residues leucine 73, glycine 104, and leucine 123–leucine 128 each bind S-adenosyl-L-methionine.

The protein belongs to the RNA methyltransferase RlmH family. Homodimer.

The protein resides in the cytoplasm. The enzyme catalyses pseudouridine(1915) in 23S rRNA + S-adenosyl-L-methionine = N(3)-methylpseudouridine(1915) in 23S rRNA + S-adenosyl-L-homocysteine + H(+). Its function is as follows. Specifically methylates the pseudouridine at position 1915 (m3Psi1915) in 23S rRNA. This chain is Ribosomal RNA large subunit methyltransferase H, found in Coxiella burnetii (strain Dugway 5J108-111).